A 179-amino-acid chain; its full sequence is Bifunctional protein PyrR (179 aa).

The PRPP-binding motif lies at 100 to 112; the sequence is VILVDDVLFTGRT.

It belongs to the purine/pyrimidine phosphoribosyltransferase family. PyrR subfamily. Homodimer and homohexamer; in equilibrium.

It carries out the reaction UMP + diphosphate = 5-phospho-alpha-D-ribose 1-diphosphate + uracil. Regulates transcriptional attenuation of the pyrimidine nucleotide (pyr) operon by binding in a uridine-dependent manner to specific sites on pyr mRNA. This disrupts an antiterminator hairpin in the RNA and favors formation of a downstream transcription terminator, leading to a reduced expression of downstream genes. Functionally, also displays a weak uracil phosphoribosyltransferase activity which is not physiologically significant. The polypeptide is Bifunctional protein PyrR (Geobacillus thermodenitrificans (strain NG80-2)).